The primary structure comprises 179 residues: Gamma-crystallin S (179 aa).

Ser-2 is modified (N-acetylserine). An N-terminal arm region spans residues 2-5 (SKTG). Beta/gamma crystallin 'Greek key' domains lie at 6–44 (TKIT…RVEG) and 45–87 (GTWA…RALH). Positions 88–93 (LSSGGQ) are connecting peptide. 2 consecutive Beta/gamma crystallin 'Greek key' domains span residues 94–134 (YKIQ…KVLD) and 135–177 (GAWI…RRIV).

The protein belongs to the beta/gamma-crystallin family. Monomer.

Its function is as follows. Crystallins are the dominant structural components of the vertebrate eye lens. The sequence is that of Gamma-crystallin S (CRYGS) from Oryctolagus cuniculus (Rabbit).